A 330-amino-acid polypeptide reads, in one-letter code: mRNA-capping enzyme (330 aa).

Residue Lys-82 is the N6-GMP-lysine intermediate of the active site.

This sequence belongs to the eukaryotic GTase family. As to quaternary structure, monomer. Mg(2+) is required as a cofactor. It depends on Mn(2+) as a cofactor.

It carries out the reaction a 5'-end diphospho-ribonucleoside in mRNA + GTP + H(+) = a 5'-end (5'-triphosphoguanosine)-ribonucleoside in mRNA + diphosphate. Functionally, mRNA capping. Transfers a GMP cap onto the end of mRNA that terminates with a 5'-diphosphate tail. This is mRNA-capping enzyme from Chlorella (PBCV-1).